The following is a 294-amino-acid chain: Acetylglutamate kinase (294 aa).

Residues 64–65, Arg-86, and Asn-189 contribute to the substrate site; that span reads GG.

It belongs to the acetylglutamate kinase family. ArgB subfamily.

The protein resides in the cytoplasm. It catalyses the reaction N-acetyl-L-glutamate + ATP = N-acetyl-L-glutamyl 5-phosphate + ADP. It participates in amino-acid biosynthesis; L-arginine biosynthesis; N(2)-acetyl-L-ornithine from L-glutamate: step 2/4. Functionally, catalyzes the ATP-dependent phosphorylation of N-acetyl-L-glutamate. This Carboxydothermus hydrogenoformans (strain ATCC BAA-161 / DSM 6008 / Z-2901) protein is Acetylglutamate kinase.